The sequence spans 143 residues: Large ribosomal subunit protein uL15 (143 aa).

The interval 1–51 (MELNTIKPASGAKHAKRRVGRGIGSGLGKTAGRGHKGQKSRAGGYHKVGFE) is disordered. The span at 21 to 31 (RGIGSGLGKTA) shows a compositional bias: gly residues.

It belongs to the universal ribosomal protein uL15 family. In terms of assembly, part of the 50S ribosomal subunit.

In terms of biological role, binds to the 23S rRNA. The polypeptide is Large ribosomal subunit protein uL15 (Methylibium petroleiphilum (strain ATCC BAA-1232 / LMG 22953 / PM1)).